The following is a 250-amino-acid chain: Serine/arginine-rich splicing factor RS31A (250 aa).

2 RRM domains span residues 2–74 (RHVY…WAKD) and 95–166 (KTLF…YALR). Residues 170-250 (EREDRYAGSR…SRSPIQRARG (81 aa)) form a disordered region. A compositionally biased stretch (basic residues) spans 177–191 (GSRRRRSPSPVYRRR). A phosphoserine mark is found at S183, S185, S201, S218, and S243. Residues 192–230 (PSPDYTRRRSPEYDRYKGPAPYERRKSPDYGRRSSDYGR) show a composition bias toward basic and acidic residues.

Belongs to the splicing factor SR family. RS subfamily. In terms of assembly, component of the spliceosome. Interacts with MOS14.

Its subcellular location is the nucleus speckle. The protein localises to the nucleus. The protein resides in the nucleoplasm. Functionally, probably involved in intron recognition and spliceosome assembly. In Arabidopsis thaliana (Mouse-ear cress), this protein is Serine/arginine-rich splicing factor RS31A (RS31A).